The chain runs to 391 residues: Ferrochelatase (391 aa).

Fe cation is bound by residues His-196 and Glu-281.

The protein belongs to the ferrochelatase family.

It localises to the cytoplasm. It catalyses the reaction heme b + 2 H(+) = protoporphyrin IX + Fe(2+). It participates in porphyrin-containing compound metabolism; protoheme biosynthesis; protoheme from protoporphyrin-IX: step 1/1. Functionally, catalyzes the ferrous insertion into protoporphyrin IX. The polypeptide is Ferrochelatase (Prochlorococcus marinus (strain NATL1A)).